The primary structure comprises 629 residues: Replication protein A 70 kDa DNA-binding subunit D (629 aa).

The segment at 112-135 (LDSKSGEEEAREPKKQKLEHSPVS) is disordered. The span at 115–131 (KSGEEEAREPKKQKLEH) shows a compositional bias: basic and acidic residues. The segment at residues 194-280 (WTIKVRVTNK…QNDYEMTLNE (87 aa)) is a DNA-binding region (OB). The C4-type zinc finger occupies 492-512 (CKTCNKKVTEALDSGYWCEGC).

This sequence belongs to the replication factor A protein 1 family. Heterotrimer of RPA1, RPA2 and RPA3 (canonical replication protein A complex).

Its subcellular location is the nucleus. Component of the replication protein A complex (RPA) required for DNA recombination, repair and replication. The activity of RPA is mediated by single-stranded DNA binding and protein interactions. Probably involved in repair of double-strand DNA breaks (DSBs) induced by genotoxic stresses. This is Replication protein A 70 kDa DNA-binding subunit D (RPA1D) from Arabidopsis thaliana (Mouse-ear cress).